The sequence spans 189 residues: Elongation factor P (189 aa).

Belongs to the elongation factor P family.

Its subcellular location is the cytoplasm. Its pathway is protein biosynthesis; polypeptide chain elongation. Its function is as follows. Involved in peptide bond synthesis. Stimulates efficient translation and peptide-bond synthesis on native or reconstituted 70S ribosomes in vitro. Probably functions indirectly by altering the affinity of the ribosome for aminoacyl-tRNA, thus increasing their reactivity as acceptors for peptidyl transferase. In Rhizobium etli (strain CIAT 652), this protein is Elongation factor P.